Reading from the N-terminus, the 359-residue chain is Alanine racemase (359 aa).

Residue K34 is the Proton acceptor; specific for D-alanine of the active site. K34 is modified (N6-(pyridoxal phosphate)lysine). R129 contacts substrate. Y255 (proton acceptor; specific for L-alanine) is an active-site residue. M303 is a binding site for substrate.

Belongs to the alanine racemase family. Pyridoxal 5'-phosphate serves as cofactor.

The catalysed reaction is L-alanine = D-alanine. It participates in amino-acid biosynthesis; D-alanine biosynthesis; D-alanine from L-alanine: step 1/1. Functionally, catalyzes the interconversion of L-alanine and D-alanine. May also act on other amino acids. This chain is Alanine racemase (alr), found in Shigella dysenteriae serotype 1 (strain Sd197).